We begin with the raw amino-acid sequence, 736 residues long: Phosphoribosylformylglycinamidine synthase subunit PurL (736 aa).

H49 is a catalytic residue. Y52 and K91 together coordinate ATP. E93 lines the Mg(2+) pocket. Substrate-binding positions include 94-97 (SHNH) and R116. H95 acts as the Proton acceptor in catalysis. Residue D117 coordinates Mg(2+). Q240 lines the substrate pocket. D268 is a Mg(2+) binding site. 312–314 (ESQ) is a binding site for substrate. Positions 493 and 530 each coordinate ATP. N531 is a Mg(2+) binding site. S533 contributes to the substrate binding site.

It belongs to the FGAMS family. In terms of assembly, monomer. Part of the FGAM synthase complex composed of 1 PurL, 1 PurQ and 2 PurS subunits.

The protein resides in the cytoplasm. It carries out the reaction N(2)-formyl-N(1)-(5-phospho-beta-D-ribosyl)glycinamide + L-glutamine + ATP + H2O = 2-formamido-N(1)-(5-O-phospho-beta-D-ribosyl)acetamidine + L-glutamate + ADP + phosphate + H(+). Its pathway is purine metabolism; IMP biosynthesis via de novo pathway; 5-amino-1-(5-phospho-D-ribosyl)imidazole from N(2)-formyl-N(1)-(5-phospho-D-ribosyl)glycinamide: step 1/2. Functionally, part of the phosphoribosylformylglycinamidine synthase complex involved in the purines biosynthetic pathway. Catalyzes the ATP-dependent conversion of formylglycinamide ribonucleotide (FGAR) and glutamine to yield formylglycinamidine ribonucleotide (FGAM) and glutamate. The FGAM synthase complex is composed of three subunits. PurQ produces an ammonia molecule by converting glutamine to glutamate. PurL transfers the ammonia molecule to FGAR to form FGAM in an ATP-dependent manner. PurS interacts with PurQ and PurL and is thought to assist in the transfer of the ammonia molecule from PurQ to PurL. This Rhodopseudomonas palustris (strain TIE-1) protein is Phosphoribosylformylglycinamidine synthase subunit PurL.